Here is a 69-residue protein sequence, read N- to C-terminus: Large ribosomal subunit protein bL31 (69 aa).

Cys-17, Cys-19, Cys-37, and Cys-40 together coordinate Zn(2+).

The protein belongs to the bacterial ribosomal protein bL31 family. Type A subfamily. As to quaternary structure, part of the 50S ribosomal subunit. It depends on Zn(2+) as a cofactor.

In terms of biological role, binds the 23S rRNA. In Clostridium botulinum (strain Eklund 17B / Type B), this protein is Large ribosomal subunit protein bL31.